The primary structure comprises 199 residues: NADH-quinone oxidoreductase subunit C (199 aa).

Belongs to the complex I 30 kDa subunit family. NDH-1 is composed of 14 different subunits. Subunits NuoB, C, D, E, F, and G constitute the peripheral sector of the complex.

Its subcellular location is the cell inner membrane. It carries out the reaction a quinone + NADH + 5 H(+)(in) = a quinol + NAD(+) + 4 H(+)(out). Functionally, NDH-1 shuttles electrons from NADH, via FMN and iron-sulfur (Fe-S) centers, to quinones in the respiratory chain. The immediate electron acceptor for the enzyme in this species is believed to be ubiquinone. Couples the redox reaction to proton translocation (for every two electrons transferred, four hydrogen ions are translocated across the cytoplasmic membrane), and thus conserves the redox energy in a proton gradient. This chain is NADH-quinone oxidoreductase subunit C, found in Paramagnetospirillum magneticum (strain ATCC 700264 / AMB-1) (Magnetospirillum magneticum).